The following is a 292-amino-acid chain: MNPLWSMSSGSVRKRAEGEEKTLAGDVKTSPPRSAPKKQLPSIPKNALPISKPTSPAPAAQSTNGTHASYGPFYLEYSLLAEFTMVVKQKLPGVYVQPSYRSALVWFGVIFIRHGLYQDGVFKFTVYIPDNYPDGDCPRLLFDIPVFHPLVDPTSGELDVKRAFAKWRRNHNHIWQVLMYARRVFYKIDTTSPLNPEAAVLYEKDIQLFKSKVVDSVKVCTARLFDQPKIEDPYAISFSPWNPSVHDEAREKMLTQKKPDEQHNKSVHVAGLSWVKPGSVQPFSKEEKTVAT.

A compositionally biased stretch (polar residues) spans 1–11 (MNPLWSMSSGS). Positions 1–64 (MNPLWSMSSG…SPAPAAQSTN (64 aa)) are disordered. Positions 14 to 23 (KRAEGEEKTL) are enriched in basic and acidic residues. Ser30 carries the phosphoserine modification. In terms of domain architecture, UBC core spans 74–222 (YLEYSLLAEF…VVDSVKVCTA (149 aa)).

It belongs to the ubiquitin-conjugating enzyme family. FTS subfamily. Component of the FTS/Hook/FHIP complex (FHF complex), composed of AKTIP/FTS, FHIP1B, and one or more members of the Hook family of proteins HOOK1, HOOK2, and HOOK3. Interacts directly with HOOK1, HOOK2 and HOOK3. The FHF complex associates with the homotypic vesicular sorting complex (the HOPS complex). Also interacts with AKT1. May interact with FHIP1A.

The protein resides in the cytoplasm. The protein localises to the cell membrane. Its function is as follows. Component of the FTS/Hook/FHIP complex (FHF complex). The FHF complex may function to promote vesicle trafficking and/or fusion via the homotypic vesicular protein sorting complex (the HOPS complex). Regulates apoptosis by enhancing phosphorylation and activation of AKT1. Increases release of TNFSF6 via the AKT1/GSK3B/NFATC1 signaling cascade. FHF complex promotes the distribution of AP-4 complex to the perinuclear area of the cell. The chain is AKT-interacting protein (Aktip) from Rattus norvegicus (Rat).